Here is a 98-residue protein sequence, read N- to C-terminus: MKSITVICFLALCTVAITSAYPQEPVLADEARPFANSLFDELPEETYQAAVENFRLKRATCDLLSGFGVGDSACAAHCIARGNRGGYCNSKKVCVCRN.

Residues 1–18 (MKSITVICFLALCTVAIT) form the signal peptide. Positions 19–58 (SAYPQEPVLADEARPFANSLFDELPEETYQAAVENFRLKR) are excised as a propeptide. Cystine bridges form between Cys-61–Cys-88, Cys-74–Cys-94, and Cys-78–Cys-96.

This sequence belongs to the invertebrate defensin family. Type 1 subfamily.

The protein resides in the secreted. Antibacterial peptide mostly active against Gram-positive bacteria. Has activity against the bacteria Gram-negative E.cloacae beta12. The polypeptide is Defensin-A (DEFA) (Aedes aegypti (Yellowfever mosquito)).